A 64-amino-acid chain; its full sequence is UPF0434 protein Bcen_1934 (64 aa).

It belongs to the UPF0434 family.

This Burkholderia orbicola (strain AU 1054) protein is UPF0434 protein Bcen_1934.